We begin with the raw amino-acid sequence, 267 residues long: 4-hydroxy-tetrahydrodipicolinate reductase (267 aa).

NAD(+) is bound by residues 9–14 (GVSGRM) and Asp-35. Arg-36 contacts NADP(+). Residues 98–100 (GTT) and 122–125 (APNM) each bind NAD(+). The active-site Proton donor/acceptor is the His-155. His-156 serves as a coordination point for (S)-2,3,4,5-tetrahydrodipicolinate. The active-site Proton donor is the Lys-159. 165–166 (GT) is a (S)-2,3,4,5-tetrahydrodipicolinate binding site.

Belongs to the DapB family.

Its subcellular location is the cytoplasm. The enzyme catalyses (S)-2,3,4,5-tetrahydrodipicolinate + NAD(+) + H2O = (2S,4S)-4-hydroxy-2,3,4,5-tetrahydrodipicolinate + NADH + H(+). The catalysed reaction is (S)-2,3,4,5-tetrahydrodipicolinate + NADP(+) + H2O = (2S,4S)-4-hydroxy-2,3,4,5-tetrahydrodipicolinate + NADPH + H(+). The protein operates within amino-acid biosynthesis; L-lysine biosynthesis via DAP pathway; (S)-tetrahydrodipicolinate from L-aspartate: step 4/4. Its function is as follows. Catalyzes the conversion of 4-hydroxy-tetrahydrodipicolinate (HTPA) to tetrahydrodipicolinate. The polypeptide is 4-hydroxy-tetrahydrodipicolinate reductase (Thiobacillus denitrificans (strain ATCC 25259 / T1)).